Reading from the N-terminus, the 384-residue chain is Secreted LysM effector LysM14 (384 aa).

The N-terminal stretch at Met-1–Ala-35 is a signal peptide. One can recognise a LysM domain in the interval Tyr-64–Leu-112. Residues Ser-185 to Thr-220 form a disordered region.

Belongs to the secreted LysM effector family.

It is found in the secreted. Functionally, secreted LysM effector that might have a role in sequestration of chitin oligosaccharides (breakdown products of fungal cell walls that are released during invasion and act as triggers of host immunity) to dampen host defense. The chain is Secreted LysM effector LysM14 from Penicillium expansum (Blue mold rot fungus).